The primary structure comprises 505 residues: MWQLNENQVYLPPPTPVATIVSTDEYVQRTSLYYHAGSARLLTIGHPYFELKKPNGDISVPKVSGHQYRVFRVRLPDPNKFGLSDTSLFNSETQRLVWACVGVEVGRGQPLGVGVSGHPYFNKDEDVENSSAYGTGPGQDSRENVAMDYKQTQLCMLGCTPPIGEYWGKGTPCNASRVTLGDCPVLELKTEVIQDGDMVDTGFGAMDFASLQANKSDVPLDLCTSISKYPDYLGMAAEPYGNSLFFFLRREQMFVRHFFNRAGTTGDSVPTDLYITGTSGRTPIAGSIYYSTPSGSLVTSDSQIFNKPLWIQKAQGHNNGICFGNQLFVTVVDTTRSTNLTLCAATQSPTPTPYNNSNFKEYLRHGEEFDLQFIFQLCVITLNAEVMTYIHAMDPTLLEDWNFKIAPPASASLEDTYRFLTNKAIACQRDAPPKVREDPYKKYKFWDVNLTERFSSQLDQFPLGRKFLMQAGVRAGPRFKSRKRPAPSSSSSSKPVTPKRKKTKR.

Residues 474 to 505 (RAGPRFKSRKRPAPSSSSSSKPVTPKRKKTKR) form a disordered region. Residues 486 to 496 (APSSSSSSKPV) show a composition bias toward low complexity.

It belongs to the papillomaviridae L1 protein family. Self-assembles into homopentamers. The capsid has an icosahedral symmetry and consists of 72 capsomers, with each capsomer being a pentamer of L1. Interacts with the minor capsid protein L2; this interaction is necessary for viral genome encapsidation. Interacts with protein E2; this interaction enhances E2-dependent replication and transcription activation.

Its subcellular location is the virion. It is found in the host nucleus. Functionally, forms an icosahedral capsid with a T=7 symmetry and a 50 nm diameter. The capsid is composed of 72 pentamers linked to each other by disulfide bonds and associated with L2 proteins. Binds to heparan sulfate proteoglycans on cell surface of basal layer keratinocytes to provide initial virion attachment. This binding mediates a conformational change in the virus capsid that facilitates efficient infection. The virion enters the host cell via endocytosis. During virus trafficking, L1 protein dissociates from the viral DNA and the genomic DNA is released to the host nucleus. The virion assembly takes place within the cell nucleus. Encapsulates the genomic DNA together with protein L2. This Homo sapiens (Human) protein is Major capsid protein L1.